Here is a 335-residue protein sequence, read N- to C-terminus: Malate dehydrogenase 1 (335 aa).

Residues 11-16 (GAGNVG) and D35 each bind NAD(+). Residues R97 and R103 each contribute to the substrate site. NAD(+) contacts are provided by residues N110 and 133–135 (VTN). Residues N135 and R166 each coordinate substrate. H190 (proton acceptor) is an active-site residue.

It belongs to the LDH/MDH superfamily. MDH type 3 family.

The enzyme catalyses (S)-malate + NAD(+) = oxaloacetate + NADH + H(+). Catalyzes the reversible oxidation of malate to oxaloacetate. This chain is Malate dehydrogenase 1 (mdh1), found in Aquifex aeolicus (strain VF5).